The sequence spans 718 residues: Acetolactate synthase, mitochondrial (718 aa).

2 disordered regions span residues 1-50 (MLTR…APVY) and 72-101 (RKIQSSASTAAASPAVRPQPAQHFQAAPQP). A compositionally biased stretch (polar residues) spans 32–45 (RYSNNIHTSSTQNA). Positions 76 to 99 (SSASTAAASPAVRPQPAQHFQAAP) are enriched in low complexity. E173 is a thiamine diphosphate binding site. FAD is bound at residue R275. Positions 296-327 (IPAKSAQPGHSPYLPSNPLNPSSQPSDPLPGD) are disordered. Over residues 306-325 (SPYLPSNPLNPSSQPSDPLP) the composition is skewed to low complexity. FAD is bound by residues 397–418 (HGSAYANFAMQEADVLIALGVR) and 449–468 (EIQPKNINKIVEAQIPVLGD). Positions 541 to 621 (QHQMWACQYY…VKVLLFNNEF (81 aa)) are thiamine pyrophosphate binding. Residues D592 and N619 each contribute to the Mg(2+) site.

This sequence belongs to the TPP enzyme family. It depends on Mg(2+) as a cofactor. Thiamine diphosphate serves as cofactor.

The protein resides in the mitochondrion. The catalysed reaction is 2 pyruvate + H(+) = (2S)-2-acetolactate + CO2. It functions in the pathway amino-acid biosynthesis; L-isoleucine biosynthesis; L-isoleucine from 2-oxobutanoate: step 1/4. Its pathway is amino-acid biosynthesis; L-valine biosynthesis; L-valine from pyruvate: step 1/4. The polypeptide is Acetolactate synthase, mitochondrial (ILV2) (Cryptococcus neoformans var. neoformans serotype D (strain JEC21 / ATCC MYA-565) (Filobasidiella neoformans)).